A 151-amino-acid polypeptide reads, in one-letter code: 3-hydroxyacyl-[acyl-carrier-protein] dehydratase FabZ (151 aa).

His54 is a catalytic residue.

This sequence belongs to the thioester dehydratase family. FabZ subfamily.

The protein localises to the cytoplasm. The enzyme catalyses a (3R)-hydroxyacyl-[ACP] = a (2E)-enoyl-[ACP] + H2O. Involved in unsaturated fatty acids biosynthesis. Catalyzes the dehydration of short chain beta-hydroxyacyl-ACPs and long chain saturated and unsaturated beta-hydroxyacyl-ACPs. In Idiomarina loihiensis (strain ATCC BAA-735 / DSM 15497 / L2-TR), this protein is 3-hydroxyacyl-[acyl-carrier-protein] dehydratase FabZ.